Reading from the N-terminus, the 211-residue chain is Octanoyltransferase (211 aa).

The 180-residue stretch at Asp32–Lys211 folds into the BPL/LPL catalytic domain. Residues Arg71 to His78, Ala145 to Gly147, and Gly158 to Ala160 contribute to the substrate site. The active-site Acyl-thioester intermediate is Cys176.

Belongs to the LipB family.

The protein localises to the cytoplasm. It carries out the reaction octanoyl-[ACP] + L-lysyl-[protein] = N(6)-octanoyl-L-lysyl-[protein] + holo-[ACP] + H(+). It participates in protein modification; protein lipoylation via endogenous pathway; protein N(6)-(lipoyl)lysine from octanoyl-[acyl-carrier-protein]: step 1/2. Functionally, catalyzes the transfer of endogenously produced octanoic acid from octanoyl-acyl-carrier-protein onto the lipoyl domains of lipoate-dependent enzymes. Lipoyl-ACP can also act as a substrate although octanoyl-ACP is likely to be the physiological substrate. The protein is Octanoyltransferase of Rickettsia massiliae (strain Mtu5).